Here is a 351-residue protein sequence, read N- to C-terminus: Phosphoribosylformylglycinamidine cyclo-ligase (351 aa).

This sequence belongs to the AIR synthase family.

The protein localises to the cytoplasm. The catalysed reaction is 2-formamido-N(1)-(5-O-phospho-beta-D-ribosyl)acetamidine + ATP = 5-amino-1-(5-phospho-beta-D-ribosyl)imidazole + ADP + phosphate + H(+). Its pathway is purine metabolism; IMP biosynthesis via de novo pathway; 5-amino-1-(5-phospho-D-ribosyl)imidazole from N(2)-formyl-N(1)-(5-phospho-D-ribosyl)glycinamide: step 2/2. The chain is Phosphoribosylformylglycinamidine cyclo-ligase from Oleidesulfovibrio alaskensis (strain ATCC BAA-1058 / DSM 17464 / G20) (Desulfovibrio alaskensis).